The primary structure comprises 323 residues: Beta-ketoacyl-[acyl-carrier-protein] synthase III (323 aa).

Active-site residues include Cys-112 and His-250. Residues 251 to 255 (QANYR) form an ACP-binding region. Residue Asn-280 is part of the active site.

This sequence belongs to the thiolase-like superfamily. FabH family. Homodimer.

Its subcellular location is the cytoplasm. It catalyses the reaction malonyl-[ACP] + acetyl-CoA + H(+) = 3-oxobutanoyl-[ACP] + CO2 + CoA. The protein operates within lipid metabolism; fatty acid biosynthesis. Functionally, catalyzes the condensation reaction of fatty acid synthesis by the addition to an acyl acceptor of two carbons from malonyl-ACP. Catalyzes the first condensation reaction which initiates fatty acid synthesis and may therefore play a role in governing the total rate of fatty acid production. Possesses both acetoacetyl-ACP synthase and acetyl transacylase activities. Its substrate specificity determines the biosynthesis of branched-chain and/or straight-chain of fatty acids. The chain is Beta-ketoacyl-[acyl-carrier-protein] synthase III from Clostridium beijerinckii (strain ATCC 51743 / NCIMB 8052) (Clostridium acetobutylicum).